Reading from the N-terminus, the 320-residue chain is D-alanine--D-alanine ligase (320 aa).

Residues 104 to 308 (KRVCLSHGVP…YEDLCVEILR (205 aa)) enclose the ATP-grasp domain. 134–189 (AAEFGMPLMLKAPHEGSTIGIAKVETAEGMQAGFDLCAKYDDVVLVEQFVKGRELT) is an ATP binding site. Residues Asp-261, Glu-275, and Asn-277 each contribute to the Mg(2+) site.

Belongs to the D-alanine--D-alanine ligase family. It depends on Mg(2+) as a cofactor. Mn(2+) serves as cofactor.

Its subcellular location is the cytoplasm. It catalyses the reaction 2 D-alanine + ATP = D-alanyl-D-alanine + ADP + phosphate + H(+). Its pathway is cell wall biogenesis; peptidoglycan biosynthesis. In terms of biological role, cell wall formation. The sequence is that of D-alanine--D-alanine ligase from Janthinobacterium sp. (strain Marseille) (Minibacterium massiliensis).